We begin with the raw amino-acid sequence, 207 residues long: Large ribosomal subunit protein bL25 (207 aa).

The protein belongs to the bacterial ribosomal protein bL25 family. CTC subfamily. Part of the 50S ribosomal subunit; part of the 5S rRNA/L5/L18/L25 subcomplex. Contacts the 5S rRNA. Binds to the 5S rRNA independently of L5 and L18.

Functionally, this is one of the proteins that binds to the 5S RNA in the ribosome where it forms part of the central protuberance. This chain is Large ribosomal subunit protein bL25, found in Bordetella petrii (strain ATCC BAA-461 / DSM 12804 / CCUG 43448).